We begin with the raw amino-acid sequence, 210 residues long: Ion-translocating oxidoreductase complex subunit G (210 aa).

A helical membrane pass occupies residues 9 to 29; it reads SLVLALFAIAATALVTITYAL. FMN phosphoryl threonine is present on T176.

Belongs to the RnfG family. As to quaternary structure, the complex is composed of six subunits: RnfA, RnfB, RnfC, RnfD, RnfE and RnfG. Requires FMN as cofactor.

Its subcellular location is the cell inner membrane. Its function is as follows. Part of a membrane-bound complex that couples electron transfer with translocation of ions across the membrane. The chain is Ion-translocating oxidoreductase complex subunit G from Aliivibrio fischeri (strain ATCC 700601 / ES114) (Vibrio fischeri).